Consider the following 462-residue polypeptide: Probable threonine/serine transporter YbxG (462 aa).

The next 12 membrane-spanning stretches (helical) occupy residues 17 to 37 (MIAL…STIS), 38 to 58 (WTGP…FFIM), 89 to 109 (ITAW…IIAV), 121 to 141 (PAWI…LISV), 154 to 174 (IKIV…FFGF), 190 to 210 (GGFF…VIAA), 238 to 258 (IIWR…TVYP), 276 to 296 (IGIT…AMSG), 331 to 351 (LYGT…NYIA), 355 to 375 (IFVY…FIIL), 398 to 418 (FAPF…VGMW), and 427 to 447 (LIVG…FGIG).

The protein belongs to the amino acid-polyamine-organocation (APC) superfamily.

Its subcellular location is the cell membrane. Its function is as follows. Probable threonine transporter. Is also active as a minor serine permease. The polypeptide is Probable threonine/serine transporter YbxG (ybxG) (Bacillus subtilis (strain 168)).